Reading from the N-terminus, the 656-residue chain is Macrolide export ATP-binding/permease protein MacB (656 aa).

Positions Ile-20 to Arg-258 constitute an ABC transporter domain. An ATP-binding site is contributed by Gly-56–Ser-63. The next 4 helical transmembrane spans lie at Ala-284–Gly-304, Leu-531–Met-551, Ala-591–Phe-611, and Leu-619–Leu-639.

It belongs to the ABC transporter superfamily. Macrolide exporter (TC 3.A.1.122) family. Homodimer.

The protein resides in the cell inner membrane. In terms of biological role, non-canonical ABC transporter that contains transmembrane domains (TMD), which form a pore in the inner membrane, and an ATP-binding domain (NBD), which is responsible for energy generation. Confers resistance against macrolides. In Azoarcus sp. (strain BH72), this protein is Macrolide export ATP-binding/permease protein MacB.